The chain runs to 567 residues: uncharacterized protein (567 aa).

10 helical membrane-spanning segments follow: residues 65 to 85 (LSLF…PSVA), 92 to 112 (LWYV…FFLI), 190 to 210 (WQWF…ACLP), 220 to 240 (VATY…LAYG), 302 to 322 (AIVM…IIVA), 353 to 373 (LGIL…ALIA), 412 to 432 (IISI…DAVF), 434 to 454 (VGAV…VFFT), 473 to 493 (IGLL…FPSV), and 503 to 523 (WTCL…AISA).

It belongs to the amino acid-polyamine-organocation (APC) superfamily.

The protein localises to the membrane. This is an uncharacterized protein from Schizosaccharomyces pombe (strain 972 / ATCC 24843) (Fission yeast).